The chain runs to 484 residues: RxLR effector protein PexRD18 (484 aa).

An N-terminal signal peptide occupies residues 1-20 (MSHQRILLLLMAAFFAWVSA). The short motif at 55 to 79 (RFLRLYDAEVRDTVRGDNDVDREER) is the RxLR-dEER element.

The protein belongs to the RxLR effector family.

It is found in the secreted. Its subcellular location is the host cell membrane. Effector that enhances P.infestans colonization of Nicotiana benthamiana leaves. This is RxLR effector protein PexRD18 from Phytophthora infestans (strain T30-4) (Potato late blight agent).